Here is a 114-residue protein sequence, read N- to C-terminus: Neurotrophic factor BDNF precursor form (114 aa).

Disulfide bonds link Cys-14–Cys-81, Cys-59–Cys-110, and Cys-69–Cys-112.

It belongs to the NGF-beta family. As to quaternary structure, monomers and homodimers. Binds to NTRK2/TRKB. Can form heterodimers with other neurotrophin family members, such as NTF3 and NTF4 (in vitro), but the physiological relevance of this is not clear. BDNF precursor form: interacts with the heterodimer formed by NGFR and SORCS2. Mature BDNF has much lower affinity for the heterodimer formed by NGFR and SORCS2. In terms of processing, N-glycosylated and glycosulfated, contrary to mature BDNF. Post-translationally, mature BDNF is produced by proteolytic removal of the propeptide, catalyzed by a FURIN family member. In addition, the precursor form is proteolytically cleaved within the propeptide, but this is not an obligatory intermediate for the production of mature BDNF. Can be converted into mature BDNF by plasmin (PLG).

The protein resides in the secreted. In terms of biological role, important signaling molecule that activates signaling cascades downstream of NTRK2. During development, promotes the survival and differentiation of selected neuronal populations of the peripheral and central nervous systems. Participates in axonal growth, pathfinding and in the modulation of dendritic growth and morphology. Major regulator of synaptic transmission and plasticity at adult synapses in many regions of the CNS. The versatility of BDNF is emphasized by its contribution to a range of adaptive neuronal responses including long-term potentiation (LTP), long-term depression (LTD), certain forms of short-term synaptic plasticity, as well as homeostatic regulation of intrinsic neuronal excitability. Its function is as follows. Important signaling molecule that activates signaling cascades downstream of NTRK2. Activates signaling cascades via the heterodimeric receptor formed by NGFR and SORCS2. Signaling via NGFR and SORCS2 plays a role in synaptic plasticity and long-term depression (LTD). Binding to NGFR and SORCS2 promotes neuronal apoptosis. Promotes neuronal growth cone collapse. The chain is Neurotrophic factor BDNF precursor form (BDNF) from Macaca mulatta (Rhesus macaque).